The primary structure comprises 292 residues: F-box only protein 16 (292 aa).

Positions 86–132 (LDFTTKLPRVLSLYIFSFLDPRSLCRCAQVCWHWKNLAELDQLWMLK) constitute an F-box domain. 2 disordered regions span residues 188–224 (SPEE…SSDK) and 238–292 (RDPM…PLCP). Residues 194-204 (SPLSAFRSSSS) show a composition bias toward low complexity. Residues 260–273 (RQSHDKKNKLQDRT) show a composition bias toward basic and acidic residues.

As to quaternary structure, part of a SCF (SKP1-cullin-F-box) protein ligase complex. Expressed in heart, spleen and colon.

In terms of biological role, probably recognizes and binds to some phosphorylated proteins and promotes their ubiquitination and degradation. In Homo sapiens (Human), this protein is F-box only protein 16 (FBXO16).